Here is a 482-residue protein sequence, read N- to C-terminus: Falcipain-2b (482 aa).

Over 1–35 the chain is Cytoplasmic; it reads MDYHMDYIPNEVISHQGERFVDKYVDRKILKNKKS. Positions 1–241 are cleaved as a propeptide — activation peptide; sequence MDYHMDYIPN…PLKNSKYLLD (241 aa). The Bipartite vacuolar targeting signal 1 motif lies at 16–25; it reads QGERFVDKYV. Residues 36–56 form a helical; Signal-anchor for type II membrane protein membrane-spanning segment; that stretch reads LLVIISLSVLSVVGFILFYFT. The Lumenal segment spans residues 57–482; sequence PNFRKSDLFK…GTDAFIPLIE (426 aa). N-linked (GlcNAc...) asparagine glycosylation occurs at asparagine 67. Positions 84-105 match the Bipartite vacuolar targeting signal 2 motif; that stretch reads KSPNGKKFIVSKIDEALSFYDN. An N-linked (GlcNAc...) asparagine glycan is attached at asparagine 117. The Nose motif; required for the correct folding of the mature form motif lies at 242–258; sequence QINYDAVIKKYKGNENF. 4 disulfide bridges follow: cysteine 280/cysteine 321, cysteine 314/cysteine 355, cysteine 340/cysteine 360, and cysteine 409/cysteine 470. Cysteine 283 is an active-site residue. Residue histidine 415 is part of the active site. The short motif at 426 to 435 is the Arm motif; binds to host hemoglobin and required for the inhibitory interaction between the propeptide and the catalytic domain element; it reads EIVNPLTKKG.

Belongs to the peptidase C1 family. Component of the hemozoin formation complex (HFC) composed of falcipains FP2A and/or FP2B, plasmepsins PMII, PMIII/HAP and PMIV, heme detoxifying protein HDP and falcilysin FLN. The HFC complex is involved in hemoglobin degradation and detoxification of heme in the food vacuole during the asexual blood stage.

The protein resides in the vacuole. Its subcellular location is the membrane. Cysteine protease which cleaves native host hemoglobin in the food vacuole during the asexual blood stage. Preferentially cleaves substrates which have a leucine at the P2 position. The sequence is that of Falcipain-2b from Plasmodium falciparum (isolate 3D7).